Reading from the N-terminus, the 256-residue chain is E3 ubiquitin-protein ligase MIR2 (256 aa).

Residues 1-83 (MASKDVEEGV…NLWPEMERQE (83 aa)) lie on the Cytoplasmic side of the membrane. The RING-CH-type zinc finger occupies 7-66 (EEGVEGPICWICREEVGNEGIHPCACTGELDVVHPQCLSTWLTVSRNTACQMCRVIYRTR). Zn(2+) contacts are provided by C15, C18, C30, C32, H40, C43, C56, and C59. A helical transmembrane segment spans residues 84 to 104 (IFELFLLMSVVVAGLVGVALC). Over 105-124 (TWTLLVILTAPAGTFSPGAV) the chain is Extracellular. A helical membrane pass occupies residues 125-145 (LGFLCFFGFYQIFIVFAFGGI). Topologically, residues 146–256 (CRVSGTVRAL…VRKNHPKNNG (111 aa)) are cytoplasmic. Positions 179–256 (DNIELTVLVG…VRKNHPKNNG (78 aa)) are disordered. The span at 193–203 (TDEEPTDESSE) shows a compositional bias: acidic residues. Positions 245-256 (KPVRKNHPKNNG) are enriched in basic residues.

As to quaternary structure, binds human MHC-I, CD86, ICAM1 and CD1D.

It is found in the host cell membrane. Its subcellular location is the host endoplasmic reticulum. It catalyses the reaction S-ubiquitinyl-[E2 ubiquitin-conjugating enzyme]-L-cysteine + [acceptor protein]-L-lysine = [E2 ubiquitin-conjugating enzyme]-L-cysteine + N(6)-ubiquitinyl-[acceptor protein]-L-lysine.. It functions in the pathway protein modification; protein ubiquitination. In terms of biological role, membrane-bound E3 ubiquitin ligase expressed at the immediate early stage of viral reactivation to mediate polyubiquitination of various host membrane proteins related to the immune response. Promotes ubiquitination and subsequent degradation of host MHC-I, CD86, DC-SIGN and DC-SIGNR, ICAM1 and CD1D molecules, presumably to prevent lysis of infected cells by cytotoxic T-lymphocytes and NK cell. Plays a role in the down-regulation of the host stress-induced NKG2D ligands MICA, MICB and CLEC2B, which enable immune cells expressing the NKG2D receptor to recognize and annihilate infected cells prior to viral spread. Alters monocyte metabolism and proliferation by mediating rapid internalization of cellular growth factor-binding receptor tyrosine kinases from the surface leading to increased signaling. This is E3 ubiquitin-protein ligase MIR2 (K5) from Homo sapiens (Human).